The sequence spans 589 residues: ATP-dependent lipid A-core flippase (589 aa).

5 helical membrane-spanning segments follow: residues 29 to 49 (LLLV…TGFL), 70 to 90 (WLPV…YITD), 157 to 177 (VIGA…TILV), 261 to 281 (MIGA…ALAG), and 283 to 303 (LTAG…PGLK). Positions 32-314 (VAALIAALIE…LTNVQNMVQR (283 aa)) constitute an ABC transmembrane type-1 domain. Residues 346–582 (IEFRDVTARY…GGLYSHLHGM (237 aa)) enclose the ABC transporter domain. Position 380–387 (380–387 (GRSGSGKS)) interacts with ATP.

This sequence belongs to the ABC transporter superfamily. Lipid exporter (TC 3.A.1.106) family. Homodimer.

Its subcellular location is the cell inner membrane. The enzyme catalyses ATP + H2O + lipid A-core oligosaccharideSide 1 = ADP + phosphate + lipid A-core oligosaccharideSide 2.. In terms of biological role, involved in lipopolysaccharide (LPS) biosynthesis. Translocates lipid A-core from the inner to the outer leaflet of the inner membrane. Transmembrane domains (TMD) form a pore in the inner membrane and the ATP-binding domain (NBD) is responsible for energy generation. The protein is ATP-dependent lipid A-core flippase of Xanthomonas axonopodis pv. citri (strain 306).